A 464-amino-acid chain; its full sequence is Bifunctional protein GlmU (464 aa).

The segment at 1–236 (MRAVILAAGL…PTEALGVNTR (236 aa)) is pyrophosphorylase. UDP-N-acetyl-alpha-D-glucosamine-binding positions include 6-9 (LAAG), Lys-20, and 77-78 (GT). A Mg(2+)-binding site is contributed by Asp-102. 4 residues coordinate UDP-N-acetyl-alpha-D-glucosamine: Gly-145, Glu-161, Asn-176, and Asn-234. Asn-234 lines the Mg(2+) pocket. Residues 237-257 (WDLALVENVIKLKIARYWAER) are linker. Positions 258–464 (GVTVHYPETV…GRGKKKLQKD (207 aa)) are N-acetyltransferase. UDP-N-acetyl-alpha-D-glucosamine is bound by residues Arg-340 and Lys-358. His-370 functions as the Proton acceptor in the catalytic mechanism. UDP-N-acetyl-alpha-D-glucosamine contacts are provided by Tyr-373 and Asn-384. Acetyl-CoA contacts are provided by residues Ala-387, 393-394 (NY), Ser-412, Gly-430, and Arg-447.

It in the N-terminal section; belongs to the N-acetylglucosamine-1-phosphate uridyltransferase family. This sequence in the C-terminal section; belongs to the transferase hexapeptide repeat family. In terms of assembly, homotrimer. It depends on Mg(2+) as a cofactor.

Its subcellular location is the cytoplasm. The enzyme catalyses alpha-D-glucosamine 1-phosphate + acetyl-CoA = N-acetyl-alpha-D-glucosamine 1-phosphate + CoA + H(+). It catalyses the reaction N-acetyl-alpha-D-glucosamine 1-phosphate + UTP + H(+) = UDP-N-acetyl-alpha-D-glucosamine + diphosphate. The protein operates within nucleotide-sugar biosynthesis; UDP-N-acetyl-alpha-D-glucosamine biosynthesis; N-acetyl-alpha-D-glucosamine 1-phosphate from alpha-D-glucosamine 6-phosphate (route II): step 2/2. It functions in the pathway nucleotide-sugar biosynthesis; UDP-N-acetyl-alpha-D-glucosamine biosynthesis; UDP-N-acetyl-alpha-D-glucosamine from N-acetyl-alpha-D-glucosamine 1-phosphate: step 1/1. It participates in bacterial outer membrane biogenesis; LPS lipid A biosynthesis. Functionally, catalyzes the last two sequential reactions in the de novo biosynthetic pathway for UDP-N-acetylglucosamine (UDP-GlcNAc). The C-terminal domain catalyzes the transfer of acetyl group from acetyl coenzyme A to glucosamine-1-phosphate (GlcN-1-P) to produce N-acetylglucosamine-1-phosphate (GlcNAc-1-P), which is converted into UDP-GlcNAc by the transfer of uridine 5-monophosphate (from uridine 5-triphosphate), a reaction catalyzed by the N-terminal domain. This is Bifunctional protein GlmU from Aquifex aeolicus (strain VF5).